The primary structure comprises 562 residues: Arginine--tRNA ligase (562 aa).

Positions 129-139 match the 'HIGH' region motif; it reads ANPTGPLHVGH.

The protein belongs to the class-I aminoacyl-tRNA synthetase family. In terms of assembly, monomer.

The protein resides in the cytoplasm. The enzyme catalyses tRNA(Arg) + L-arginine + ATP = L-arginyl-tRNA(Arg) + AMP + diphosphate. This chain is Arginine--tRNA ligase, found in Xanthomonas axonopodis pv. citri (strain 306).